We begin with the raw amino-acid sequence, 357 residues long: Peptide chain release factor 1 (357 aa).

Q234 carries the N5-methylglutamine modification.

Belongs to the prokaryotic/mitochondrial release factor family. Methylated by PrmC. Methylation increases the termination efficiency of RF1.

It localises to the cytoplasm. Peptide chain release factor 1 directs the termination of translation in response to the peptide chain termination codons UAG and UAA. The chain is Peptide chain release factor 1 from Nocardioides sp. (strain ATCC BAA-499 / JS614).